We begin with the raw amino-acid sequence, 222 residues long: Ras-related protein Rab11D (222 aa).

22–29 contributes to the GTP binding site; it reads GDSAVGKS. Residues 44–52 carry the Effector region motif; that stretch reads SKATIGVEF. GTP is bound by residues 70 to 74 and 128 to 131; these read DTAGQ and NKTD. S-geranylgeranyl cysteine attachment occurs at residues Cys219 and Cys220.

Belongs to the small GTPase superfamily. Rab family.

Its subcellular location is the cell membrane. The sequence is that of Ras-related protein Rab11D (RAB11D) from Nicotiana tabacum (Common tobacco).